Consider the following 487-residue polypeptide: Sensor protein CopS (487 aa).

The Periplasmic segment spans residues 1–9 (MKPGSLTLR). A helical transmembrane segment spans residues 10-30 (LSLLFVVAVAAVLIIVGVAFN). Residues 31 to 136 (ELSRHHFRAL…TASVSLPTAS (106 aa)) lie on the Cytoplasmic side of the membrane. A helical membrane pass occupies residues 137–157 (PPLTAWLVLDVTTHMHFFAML). Topologically, residues 158–159 (ER) are periplasmic. The helical transmembrane segment at 160–180 (WFWGVLLASTVLSAALGWLVA) threads the bilayer. An HAMP domain is found at 181–234 (KNGLRPVARVTQTAASMSAGSLKERIPLEPVPDELRALITAFNSMLGRLDDSFM). The Cytoplasmic segment spans residues 181–487 (KNGLRPVARV…EHETGCHCAG (307 aa)). Residues 242-455 (DIAHELRTPI…LHPHLHAIAC (214 aa)) enclose the Histidine kinase domain. The residue at position 245 (H245) is a Phosphohistidine; by autocatalysis.

The protein resides in the cell inner membrane. The catalysed reaction is ATP + protein L-histidine = ADP + protein N-phospho-L-histidine.. Functionally, member of the two-component regulatory system CopS/CopR. Involved in the activation of copper resistance gene operon copABCD. Specifically recognizes or transduces a signal only in response to copper. This would lead to phosphorylation of CopR in the cytoplasm. CopS/CopR may also regulate chromosomally encoded genes. May also be involved in basic copper metabolism. The polypeptide is Sensor protein CopS (copS) (Pseudomonas syringae pv. tomato).